Reading from the N-terminus, the 974-residue chain is MGWGAPLLSRMLHGPGQAGETSPVPERQSGSENPASEDRRPLEKQCSHHLYTMGQNCQRGQAVDVEPKIRPPLTEEKIDKYLYAMRLSDEILIDILTRFKKEMKNGLSRDYNPTASVKMLPTFVRSIPDGSEKGDFIALDLGGSSFRILRVQVNHEKSQNVSMESEVYDTPENIVHGSGSQLFDHVAECLGDFMEKRKIKDKKLPVGFTFSFPCRQSKIDEAVLITWTKRFKASGVEGADVVKLLNKAIKKRGDYDANIVAVVNDTVGTMMTCGYDDQQCEVGLIIGTGTNACYMEELRHIDLVEGDEGRMCINTEWGAFGDDGSLEDIRTEFDRELDRGSLNPGKQLFEKMVSGMYMGELVRLILVKMAKESLLFEGRITPELLTRGKFTTSDVAAIETDKEGVQNAKEILTRLGVEPSHDDCVSVQHVCTIVSFRSANLVAATLGAILNRLRDNKGTPRLRTTVGVDGSLYKMHPQYSRRFHKTLRRLVPDSDVRFLLSESGSGKGAAMVTAVAYRLAEQHRQIEETLSHFRLSKQALMEVKKKLRSEMEMGLRKETNSRATVKMLPSYVRSIPDGTEHGDFLALDLGGTNFRVLLVKIRSGKKRTVEMHNKIYSIPLEIMQGTGDELFDHIVSCISDFLDYMGIKGPRMPLGFTFSFPCKQTSLDCGILITWTKGFKATDCVGHDVATLLRDAVKRREEFDLDVVAVVNDTVGTMMTCAYEEPSCEIGLIVGTGSNACYMEEMKNVEMVEGNQGQMCINMEWGAFGDNGCLDDIRTDFDKVVDEYSLNSGKQRFEKMISGMYLGEIVRNILIDFTKKGFLFRGQISEPLKTRGIFETKFLSQIESDRLALLQVRAILQQLGLNSTCDDSILVKTVCGVVSKRAAQLCGAGMAAVVEKIRENRGLDHLNVTVGVDGTLYKLHPHFSRIMHQTVKELSPKCTVSFLLSEDGSGKGAALITAVGVRLRGDPTNA.

Positions M1–L42 are disordered. The mitochondrial-binding peptide (MBP) stretch occupies residues C57–E66. Hexokinase domains lie at P72–A514 and A520–A962. ATP contacts are provided by residues R86 and D140–S145. The hexokinase small subdomain 1 stretch occupies residues D129 to V263. A D-glucose 6-phosphate-binding site is contributed by D140–R147. Residues S211, T228–K229, and N264–D265 contribute to the D-glucose site. The hexokinase large subdomain 1 stretch occupies residues N264–S503. D-glucose 6-phosphate contacts are provided by D265 and T288. D-glucose-binding positions include N291, E316, and Q347–E350. Phosphoserine is present on S393. D469 to S471 is a D-glucose 6-phosphate binding site. R481 to R482 provides a ligand contact to ATP. D-glucose 6-phosphate contacts are provided by residues S505 and D588–T592. Residues D577 to V711 form a hexokinase small subdomain 2 region. ATP is bound at residue D588–N593. D-glucose is bound by residues S659 to F660, T676 to K677, and N712 to D713. Residues N712 to D951 are hexokinase large subdomain 2. 2 residues coordinate D-glucose 6-phosphate: D713 and T736. Residue T736 participates in ATP binding. D-glucose contacts are provided by residues S738–N739, E764, and E798. ATP contacts are provided by residues G803–M804, T840–S844, and T919–L923. Residues D917 to T919 and S953 each bind D-glucose 6-phosphate.

Belongs to the hexokinase family. Monomer. Interacts with RABL2/RABL2A; binds preferentially to GTP-bound RABL2. Interacts with VDAC1. The HK1-VDAC1 complex interacts with ATF2. Interacts (via N-terminal spermatogenic cell-specific region) with PFKM isoform 2 and isoform 3 (via C-terminus). Interacts with SMAD5. In terms of processing, tyrosine-phosphorylated. As to expression, in rapidly growing tumor cells exhibiting high glucose catabolic rates, isoform HK1 is markedly elevated. Isoform HK1-SA, isoform HK1-SB and isoform HK1-SC are found only in spermatogenic cells. Isoform HK1-SC is detected in round spermatids, condensing spermatids and mature sperm where it is found in the head membranes, mitochondria of the midpiece and the fibrous sheath of the flagellum. Expressed within the principal piece and midpiece of sperm tail (at protein level).

The protein resides in the mitochondrion outer membrane. Its subcellular location is the cytoplasm. The protein localises to the cytosol. It is found in the membrane. It catalyses the reaction a D-hexose + ATP = a D-hexose 6-phosphate + ADP + H(+). It carries out the reaction D-fructose + ATP = D-fructose 6-phosphate + ADP + H(+). The enzyme catalyses D-glucose + ATP = D-glucose 6-phosphate + ADP + H(+). The catalysed reaction is D-mannose + ATP = D-mannose 6-phosphate + ADP + H(+). It catalyses the reaction D-glucosamine + ATP = D-glucosamine 6-phosphate + ADP + H(+). It functions in the pathway carbohydrate metabolism; hexose metabolism. The protein operates within carbohydrate degradation; glycolysis; D-glyceraldehyde 3-phosphate and glycerone phosphate from D-glucose: step 1/4. Hexokinase is an allosteric enzyme inhibited by its product D-glucose 6-phosphate. Hexokinase activity is inhibited by N-acetyl-D-glucosamine. Catalyzes the phosphorylation of various hexoses, such as D-glucose, D-glucosamine, D-fructose, D-mannose and 2-deoxy-D-glucose, to hexose 6-phosphate (D-glucose 6-phosphate, D-glucosamine 6-phosphate, D-fructose 6-phosphate, D-mannose 6-phosphate and 2-deoxy-D-glucose 6-phosphate, respectively). Does not phosphorylate N-acetyl-D-glucosamine. Mediates the initial step of glycolysis by catalyzing phosphorylation of D-glucose to D-glucose 6-phosphate. Involved in innate immunity and inflammation by acting as a pattern recognition receptor for bacterial peptidoglycan. When released in the cytosol, N-acetyl-D-glucosamine component of bacterial peptidoglycan inhibits the hexokinase activity of HK1 and causes its dissociation from mitochondrial outer membrane, thereby activating the NLRP3 inflammasome. This is Hexokinase-1 from Mus musculus (Mouse).